Reading from the N-terminus, the 257-residue chain is Phosphonates import ATP-binding protein PhnC (257 aa).

Residues 2-246 (IEFRNVSKVY…KFAEIYGDVV (245 aa)) enclose the ABC transporter domain. 35–42 (GLSGAGKS) contributes to the ATP binding site.

It belongs to the ABC transporter superfamily. Phosphonates importer (TC 3.A.1.9.1) family. In terms of assembly, the complex is composed of two ATP-binding proteins (PhnC), two transmembrane proteins (PhnE) and a solute-binding protein (PhnD).

Its subcellular location is the cell membrane. It carries out the reaction phosphonate(out) + ATP + H2O = phosphonate(in) + ADP + phosphate + H(+). Functionally, part of the ABC transporter complex PhnCDE involved in phosphonates import. Responsible for energy coupling to the transport system. The polypeptide is Phosphonates import ATP-binding protein PhnC (Bacillus anthracis).